The following is a 433-amino-acid chain: MTRDRSNLLYEDAGRFIPGGVNSPVRSGRAVGTNPIFIREAKGCYLWDEDGNRYVDFVASWGPLIVGHAHPAVVEAVRAAVEKGTSYGIPTEIEVRMARKVVEMVPSIEMVRMVNSGTEATMSAIRLARGYTGRPGIIKFNGCYHGHGDCLLVKAGSGLATFGIPGSPGVPEEVVRHTIPLSYNDLDEVESVMERDGDRIAAIILEPVAANMGLVLPRPGFLEGLRKLCDKHGALLIFDEVITGFRLARGGAQEFFGVTPDLTCLGKIIGGGLPVGAYGGRRDIMMKMAPVGNVYQAGTLSGNPLAMAAGLATLDLLCEDGVYESLEEKTNHLVDGLNEAAGAAGVPVFTSRIASLGCGFFTSEPVFDFASALASNTDAYAVFFREMLNRGVYFAPAQFEAFFLSMAHESKDLDFTIEAAGNAFVRVKELCAF.

Lys267 is modified (N6-(pyridoxal phosphate)lysine).

Belongs to the class-III pyridoxal-phosphate-dependent aminotransferase family. HemL subfamily. As to quaternary structure, homodimer. Pyridoxal 5'-phosphate serves as cofactor.

The protein resides in the cytoplasm. It carries out the reaction (S)-4-amino-5-oxopentanoate = 5-aminolevulinate. It functions in the pathway porphyrin-containing compound metabolism; protoporphyrin-IX biosynthesis; 5-aminolevulinate from L-glutamyl-tRNA(Glu): step 2/2. In Syntrophobacter fumaroxidans (strain DSM 10017 / MPOB), this protein is Glutamate-1-semialdehyde 2,1-aminomutase.